Here is a 198-residue protein sequence, read N- to C-terminus: Methyl-coenzyme M reductase I operon protein C (198 aa).

MCR is composed of three subunits: alpha, beta, and gamma. The function of proteins C and D is not known.

This chain is Methyl-coenzyme M reductase I operon protein C (mcrC), found in Methanothermobacter marburgensis (strain ATCC BAA-927 / DSM 2133 / JCM 14651 / NBRC 100331 / OCM 82 / Marburg) (Methanobacterium thermoautotrophicum).